The primary structure comprises 577 residues: (E)-beta-farnesene synthase (577 aa).

Residues Asp-327, Asp-331, Asp-474, Ser-478, and Glu-482 each coordinate Mg(2+). The DDXXD motif motif lies at Asp-327–Asp-331.

This sequence belongs to the terpene synthase family. It depends on Mg(2+) as a cofactor. Co(2+) serves as cofactor. Mn(2+) is required as a cofactor. Expressed in flowers.

The protein resides in the cytoplasm. The catalysed reaction is (2E,6E)-farnesyl diphosphate = (E)-beta-farnesene + diphosphate. Its pathway is secondary metabolite biosynthesis; terpenoid biosynthesis. Its activity is regulated as follows. Strongly inhibited by manganese at concentration higher than 20 uM. Functionally, sesquiterpene cyclase catalyzing the production of beta-farnesene from farnesyl diphosphate. Unable to use geranyl diphosphate as substrate. In Artemisia annua (Sweet wormwood), this protein is (E)-beta-farnesene synthase (CASC125).